Consider the following 200-residue polypeptide: Translation machinery-associated protein 22 (200 aa).

Positions 95 to 166 constitute an SUI1 domain; the sequence is VVIRREARTK…EVEAYIHSLL (72 aa).

Belongs to the DENR family. As to quaternary structure, interacts with the 40S ribosomal subunit.

The protein resides in the cytoplasm. This chain is Translation machinery-associated protein 22 (TMA22), found in Kluyveromyces lactis (strain ATCC 8585 / CBS 2359 / DSM 70799 / NBRC 1267 / NRRL Y-1140 / WM37) (Yeast).